We begin with the raw amino-acid sequence, 79 residues long: Acyl carrier protein (79 aa).

The Carrier domain maps to 2–77; it reads SDVAERVKKI…DAIDFIKANA (76 aa). O-(pantetheine 4'-phosphoryl)serine is present on Ser37.

It belongs to the acyl carrier protein (ACP) family. In terms of processing, 4'-phosphopantetheine is transferred from CoA to a specific serine of apo-ACP by AcpS. This modification is essential for activity because fatty acids are bound in thioester linkage to the sulfhydryl of the prosthetic group.

Its subcellular location is the cytoplasm. It participates in lipid metabolism; fatty acid biosynthesis. Carrier of the growing fatty acid chain in fatty acid biosynthesis. In Azospirillum brasilense, this protein is Acyl carrier protein.